The following is a 314-amino-acid chain: Polyamine aminopropyltransferase (314 aa).

Positions 13-249 constitute a PABS domain; the sequence is WSWFLEWLTP…SMWGFVVASD (237 aa). Glutamine 42 lines the S-methyl-5'-thioadenosine pocket. Residues histidine 73 and glutamate 97 each coordinate spermidine. S-methyl-5'-thioadenosine is bound by residues aspartate 117 and 149-150; that span reads DA. Aspartate 168 (proton acceptor) is an active-site residue. Residue proline 177 coordinates S-methyl-5'-thioadenosine.

This sequence belongs to the spermidine/spermine synthase family. In terms of assembly, homodimer or homotetramer.

It is found in the cytoplasm. It carries out the reaction S-adenosyl 3-(methylsulfanyl)propylamine + putrescine = S-methyl-5'-thioadenosine + spermidine + H(+). Its pathway is amine and polyamine biosynthesis; spermidine biosynthesis; spermidine from putrescine: step 1/1. Its function is as follows. Catalyzes the irreversible transfer of a propylamine group from the amino donor S-adenosylmethioninamine (decarboxy-AdoMet) to putrescine (1,4-diaminobutane) to yield spermidine. The sequence is that of Polyamine aminopropyltransferase from Aeropyrum pernix (strain ATCC 700893 / DSM 11879 / JCM 9820 / NBRC 100138 / K1).